The chain runs to 333 residues: Ribosomal RNA small subunit methyltransferase H (333 aa).

Residues 34 to 36 (GGH), Asp59, Phe86, Asp112, and Gln119 each bind S-adenosyl-L-methionine.

Belongs to the methyltransferase superfamily. RsmH family.

It localises to the cytoplasm. The catalysed reaction is cytidine(1402) in 16S rRNA + S-adenosyl-L-methionine = N(4)-methylcytidine(1402) in 16S rRNA + S-adenosyl-L-homocysteine + H(+). Specifically methylates the N4 position of cytidine in position 1402 (C1402) of 16S rRNA. This Prosthecochloris aestuarii (strain DSM 271 / SK 413) protein is Ribosomal RNA small subunit methyltransferase H.